A 1892-amino-acid chain; its full sequence is MKNIFRKFVFTIFVCLINLQLIAASFNEKIPLYFKLTNENLLAGQNALNIDLCDSRIKEWCTKPQRELGLNGKKINDYISISPDIKGEWRFGWWYNINFTPESNFVAHQTYKITIEDYIFPNFVGLKSNNISFTTLPLLPIIKEMNYLQDNIDISKKFVQTKIAFNYPIDPKTLEERIEFIKSSTKEKLPFSIKFNTNNTEATIITNIPPLTDKEDTISVIIKDGVKPLHGGEVFTYKNVKDPNNKTPNNIRYSYKENVLIPSLSSYLKITNSTATIVKDDKLKPEQIIIITTNTPVSGEEIKKHLELFLLPQDKPAFLGVAGKKNYKWQNPKEITDDILKSSEKINFELLSSVPSITTMHSFKVDTFASRALLVKVNQGVKTSDNLTLGSDYFQIVQIPDNPKEVKLMSDGSILSLAGKRKLPVYSLGIDKLYLEIDRINQQEVNHLISQTNRYNIFQNPTFINEYTFNEYNISEVFQEEVIVNSQNLNLPHYTDLDFSKYFNLEEAGSYSKGLFLAKVYAKDNNNIISQDKRLILVTDLGCIVKTDKTGTHHIFVSYISNGKPAGGVKADIIGLNGEVLVSSKTDSKGHAVLSNINDFSKEKTPVAYILTTKDDFAFMPYSRIDRQVNYSRFDVAGAVSSDQGLKAYLFSDRGIYRPNEQGHIGIMLKQTDWQGKFDGLPLEIQVTNPRGKVIDKSKIVLDAEGFGEYLFSTLDDALTGLYNISLYLVGDKGSNNYLNSVSVRVGDFQPDRMKININFNNSQDELWTNPKDLKATVNLINLYGTPAENRKVSGFIDIRPTEFFVPRFKEYKFYSSKGNKEFFYERLGDITTDSKGTANFDLNLEKYYNATFNLTFSAEGFEPDSGRSVNASKSLIVSPLPYIIGFRSDSDLKYIKTKTSAAIEFIAISNKAEKVAAPNLTLNLKKINYVNNLVADSNGNYSYSSVPIETNISSDKINITANESYIYKVPTKEAGDYVIYLTDKEDTIFAQAEFSVIGEGNVTANLTDKANLKVKLDKDDYTAGDTILLNIITPYTGYGLITIETDKVHNFEWFKADENNSIQEIKIPDGFEGKGYVNVQFIRDIEATEIFISPFSYAVVPFTAGIYKHKQDIGLTLPAKIKSGEKLAIRYRTTNPGKIIIFAVDAGILSFAGYQTPDPLNYFINDKALEVRTSQIMDLILPERPLLMKAYMAAPAGDGCINVARNLNPFKRKSQPPIAFWSGILEADLDEREVTFDIPSYFNGTLRVIGVASSLDSIGTSKADLLVQSDLIINPNLPLFVAPNDEFTVPVTIFNNLKDSGNAQVFLNIETSEGLKILDYPKEIPIDENKEATINVKLKATDQLGSADLKVVASINHLKPDIISMAVVHSSELTSTTSVRPASPSVTTVNTGFITDNKANLKILRDVYPEFAKLQISASKSPLAIISGFKDFLDNYPYGCTEQLISQNFANILLYNEQELVQILKTDRKNMDESLSKIFQTLSERQNYDGGFRYWNNFNDDSDPFISVYAMHFLSEGATRYLAVPSDTFNQGIYYLENMANRSINSLDEAREKAYAVYILTQNSVITTSYIANILKYLDEYHKNTWQDDLTSVYLAASYKMLQMNEEAEKLLDRFTLNKPISKTDYQYYNPLIKYSQYLYLIAMHFPERLKDFDPKIVQDIALFAKDNYNSLSASYAIMASLAYADKINHVDEATIKVTSTDKEVTLKGNKVMIAELSVENKNIDLTSSSNGFFYQLLTSGYDKQLTENKEIVKGIEITKKYLDENNKEVSKVKLGDNITVEITMRSGSNKTLSNMVLIDLLPAGFELLPDNNHINILERTQEVMIWKPIYINNRDDRVMIFGTISDQKMTYQYKIKAVNKGIFSTPAIYSEAMYDPQTYYRGVIGNIIVE.

The first 23 residues, 1–23, serve as a signal peptide directing secretion; it reads MKNIFRKFVFTIFVCLINLQLIA. Residues 1441-1444 constitute a cross-link (isoglutamyl cysteine thioester (Cys-Gln)); it reads CTEQ.

It belongs to the protease inhibitor I39 (alpha-2-macroglobulin) family. Bacterial alpha-2-macroglobulin subfamily.

Protects the bacterial cell from host peptidases. This Rickettsia conorii (strain ATCC VR-613 / Malish 7) protein is Alpha-2-macroglobulin.